The primary structure comprises 1194 residues: IQ motif and SEC7 domain-containing protein 3 (1194 aa).

Positions 20–56 form a coiled coil; it reads AIVQNQQSLIHTQRQRIDELERRLDELSAENRSLWEH. Disordered regions lie at residues 62-149 and 229-272; these read AQPP…EKER and GRPS…QQPA. Pro residues predominate over residues 63–78; sequence QPPPGLVPPPSAPLPA. The span at 79–92 shows a compositional bias: low complexity; that stretch reads PAATAPAATAAQEP. Polar residues predominate over residues 122-133; that stretch reads PSSRVQTPQSPH. Ser255 is subject to Phosphoserine. The IQ domain maps to 311-340; sequence SRRAACTIQTAFRQYQLSKNFEKIRNSLLE. 2 disordered regions span residues 439 to 471 and 515 to 610; these read SAGQ…QGHS and PAAV…KSAK. Composition is skewed to low complexity over residues 561–572 and 600–610; these read VAEAVVEEAVAT and SSSSASTKSAK. The 194-residue stretch at 646–839 folds into the SEC7 domain; it reads TLSTDTLRKR…VGIYERIQQK (194 aa). Residues 852-985 enclose the PH domain; it reads TKVEKSIVGM…LKESIAEVTE (134 aa). 2 disordered regions span residues 1002-1099 and 1137-1175; these read KTLS…PTPP and SSDS…HQFC. Basic and acidic residues predominate over residues 1024-1035; the sequence is AKREAMAGEKAT. Over residues 1036-1052 the composition is skewed to polar residues; that stretch reads ESSGEVSIHNRLQTFQH. Pro residues-rich tracts occupy residues 1064 to 1099 and 1159 to 1169; these read APSP…PTPP and PPLPPPPPPYN.

The protein belongs to the BRAG family. As to quaternary structure, interacts with DLG1 and DLG4. Interacts with GPHN. As to expression, expressed in brain. Localized to dendrites, as well as somas of neuronal cells.

It localises to the cytoplasm. The protein resides in the postsynaptic density. Its function is as follows. Acts as a guanine nucleotide exchange factor (GEF) for ARF1. This Rattus norvegicus (Rat) protein is IQ motif and SEC7 domain-containing protein 3 (Iqsec3).